The chain runs to 473 residues: Glutamate--tRNA ligase 2 (473 aa).

The 'HIGH' region motif lies at 11-21; sequence PSPTGYLHIGG. Over residues 113 to 133 the composition is skewed to basic and acidic residues; that stretch reads KARAEGRPPRYDGRWRDRDPS. Residues 113–136 are disordered; that stretch reads KARAEGRPPRYDGRWRDRDPSEAP. The 'KMSKS' region signature appears at 240–244; that stretch reads KLSKR. Lysine 243 serves as a coordination point for ATP.

Belongs to the class-I aminoacyl-tRNA synthetase family. Glutamate--tRNA ligase type 1 subfamily. In terms of assembly, monomer.

It is found in the cytoplasm. It catalyses the reaction tRNA(Glu) + L-glutamate + ATP = L-glutamyl-tRNA(Glu) + AMP + diphosphate. Catalyzes the attachment of glutamate to tRNA(Glu) in a two-step reaction: glutamate is first activated by ATP to form Glu-AMP and then transferred to the acceptor end of tRNA(Glu). This is Glutamate--tRNA ligase 2 from Brucella abortus (strain S19).